Consider the following 354-residue polypeptide: MTPPTMLQTAPVESFNLNPKSTQQAINLKSDAKNGKVSFADWNEFKFAPIRESTVSRAMTRRYFADLDKFAESDIVIIGAGSAGLSAAYTLGKNRPDLKIAIIEASVSPGGGCWLGGQLFSAMVLRKPAHLFLDDMGLDYEDEGDYVVVKHAALFMSTLMSKVLQFPNIKLFNATAVEDLITRKDPATNLQRIAGVVVNWAQLDHDTQSCMDPNTINCNVVLSTSGHDGPFGAFTAKRLEQLGRAPRDVTAGFTKPSITTSKLQEPEPISNFQLGGMKGLDMNKAEDAIVKGTREVVPGLVIAGMELAEVDGSNRMGPTFGAMALSGVKAAESVLNVLELRKQQNEACYGAYKG.

Substrate-binding positions include Ala83, 104-105 (EA), Gly112, and Val177. Residue Cys210 is modified to 2,3-didehydroalanine (Cys). Residues Asp212, His227, Met305, and 315-317 (RMG) contribute to the substrate site.

It belongs to the THI4 family. Homooctamer. It depends on Fe cation as a cofactor. During the catalytic reaction, a sulfide is transferred from Cys-210 to a reaction intermediate, generating a dehydroalanine residue.

Its subcellular location is the cytoplasm. It localises to the nucleus. It carries out the reaction [ADP-thiazole synthase]-L-cysteine + glycine + NAD(+) = [ADP-thiazole synthase]-dehydroalanine + ADP-5-ethyl-4-methylthiazole-2-carboxylate + nicotinamide + 3 H2O + 2 H(+). Its function is as follows. Involved in biosynthesis of the thiamine precursor thiazole. Catalyzes the conversion of NAD and glycine to adenosine diphosphate 5-(2-hydroxyethyl)-4-methylthiazole-2-carboxylic acid (ADT), an adenylated thiazole intermediate. The reaction includes an iron-dependent sulfide transfer from a conserved cysteine residue of the protein to a thiazole intermediate. The enzyme can only undergo a single turnover, which suggests it is a suicide enzyme. May have additional roles in adaptation to various stress conditions and in DNA damage tolerance. This is Thiamine thiazole synthase from Candida albicans (strain SC5314 / ATCC MYA-2876) (Yeast).